Consider the following 463-residue polypeptide: Fumarate hydratase class II (463 aa).

Residues 98-100 (SGT), 129-132 (HPND), 139-141 (SSN), and threonine 187 contribute to the substrate site. Residues 121–141 (KKGGKSPVHPNDHVNKGQSSN) form a disordered region. Histidine 188 (proton donor/acceptor) is an active-site residue. Residue serine 318 is part of the active site. Substrate contacts are provided by residues serine 319 and 324–326 (KVN).

The protein belongs to the class-II fumarase/aspartase family. Fumarase subfamily. Homotetramer.

It is found in the cytoplasm. The catalysed reaction is (S)-malate = fumarate + H2O. It participates in carbohydrate metabolism; tricarboxylic acid cycle; (S)-malate from fumarate: step 1/1. Functionally, involved in the TCA cycle. Catalyzes the stereospecific interconversion of fumarate to L-malate. The polypeptide is Fumarate hydratase class II (Rickettsia conorii (strain ATCC VR-613 / Malish 7)).